A 102-amino-acid polypeptide reads, in one-letter code: Small ribosomal subunit protein uS10 (102 aa).

It belongs to the universal ribosomal protein uS10 family. Part of the 30S ribosomal subunit.

Its function is as follows. Involved in the binding of tRNA to the ribosomes. In Rhodopseudomonas palustris (strain BisB18), this protein is Small ribosomal subunit protein uS10.